The following is a 208-amino-acid chain: CASP-like protein 4A4 (208 aa).

At Met-1–His-53 the chain is on the cytoplasmic side. The helical transmembrane segment at Val-54–Leu-74 threads the bilayer. The Extracellular portion of the chain corresponds to Ala-75–Ser-92. Asn-89 carries an N-linked (GlcNAc...) asparagine glycan. A helical membrane pass occupies residues Phe-93–Thr-113. Topologically, residues Ser-114–Phe-141 are cytoplasmic. A helical transmembrane segment spans residues Ile-142–Ile-162. The Extracellular segment spans residues Gln-163–Asn-176. N-linked (GlcNAc...) asparagine glycosylation is present at Asn-175. The chain crosses the membrane as a helical span at residues Ser-177–Leu-197. Residues Ser-198–Trp-208 lie on the Cytoplasmic side of the membrane.

Belongs to the Casparian strip membrane proteins (CASP) family. In terms of assembly, homodimer and heterodimers.

The protein localises to the cell membrane. The sequence is that of CASP-like protein 4A4 from Arabidopsis thaliana (Mouse-ear cress).